The chain runs to 339 residues: Glycerol-3-phosphate dehydrogenase [NAD(P)+] (339 aa).

Residues serine 15, tyrosine 16, histidine 36, and lysine 110 each coordinate NADPH. Lysine 110, glycine 139, and threonine 141 together coordinate sn-glycerol 3-phosphate. Residue alanine 143 coordinates NADPH. Positions 195, 248, 258, 259, and 260 each coordinate sn-glycerol 3-phosphate. Lysine 195 acts as the Proton acceptor in catalysis. Arginine 259 contributes to the NADPH binding site. NADPH is bound by residues valine 283 and glutamate 285.

This sequence belongs to the NAD-dependent glycerol-3-phosphate dehydrogenase family.

Its subcellular location is the cytoplasm. The catalysed reaction is sn-glycerol 3-phosphate + NAD(+) = dihydroxyacetone phosphate + NADH + H(+). The enzyme catalyses sn-glycerol 3-phosphate + NADP(+) = dihydroxyacetone phosphate + NADPH + H(+). Its pathway is membrane lipid metabolism; glycerophospholipid metabolism. Its function is as follows. Catalyzes the reduction of the glycolytic intermediate dihydroxyacetone phosphate (DHAP) to sn-glycerol 3-phosphate (G3P), the key precursor for phospholipid synthesis. This chain is Glycerol-3-phosphate dehydrogenase [NAD(P)+], found in Salmonella agona (strain SL483).